The sequence spans 1225 residues: Chromosome-associated kinesin KIF4 (1225 aa).

The Kinesin motor domain maps to 9–338; that stretch reads IPVRVVRCRP…LRYADRARKI (330 aa). Position 88 to 95 (88 to 95) interacts with ATP; the sequence is GQTGSGKT. Positions 352-1003 form a coiled coil; the sequence is ELNHLKQQVQ…LKQKMLLVQV (652 aa). Disordered stretches follow at residues 498–520, 717–744, and 1006–1047; these read QDAA…FTTQ, NKRL…GMEG, and GQKL…PTPE. Over residues 507–520 the composition is skewed to polar residues; that stretch reads GQVTKRSSDDFTTQ. Basic and acidic residues predominate over residues 719 to 738; sequence RLKDALQKQREAADKRKESQ. The globular stretch occupies residues 1004–1225; it reads ASGQKLRRDQ…GCTPIKEEID (222 aa).

This sequence belongs to the TRAFAC class myosin-kinesin ATPase superfamily. Kinesin family. Chromokinesin subfamily. [2Fe-2S] cluster is required as a cofactor. It depends on [4Fe-4S] cluster as a cofactor. As to expression, expressed in proliferating cells; neuroepithelium of embryos.

Its subcellular location is the nucleus. It is found in the chromosome. The protein resides in the cytoplasm. It localises to the cytoskeleton. In terms of biological role, iron-sulfur (Fe-S) cluster binding motor protein that has a role in chromosome segregation during mitosis. Required for mitotic chromosomal positioning and bipolar spindle stabilization. The polypeptide is Chromosome-associated kinesin KIF4 (KIF4) (Gallus gallus (Chicken)).